The chain runs to 272 residues: Proteasome subunit beta type-5 (272 aa).

The propeptide at 1-55 (MKLDTSGLESTAPIFRRSDFVFDGLQMTPSFDLPNPTDFDGFQKEAVQMVKPAKG) is removed in mature form. Threonine 56 acts as the Nucleophile in catalysis.

Belongs to the peptidase T1B family. As to quaternary structure, the 26S proteasome consists of a 20S proteasome core and two 19S regulatory subunits. The 20S proteasome core is composed of 28 subunits that are arranged in four stacked rings, resulting in a barrel-shaped structure. The two end rings are each formed by seven alpha subunits, and the two central rings are each formed by seven beta subunits. The catalytic chamber with the active sites is on the inside of the barrel.

It is found in the cytoplasm. The protein localises to the nucleus. The enzyme catalyses Cleavage of peptide bonds with very broad specificity.. In terms of biological role, the proteasome is a multicatalytic proteinase complex which is characterized by its ability to cleave peptides with Arg, Phe, Tyr, Leu, and Glu adjacent to the leaving group at neutral or slightly basic pH. The proteasome has an ATP-dependent proteolytic activity. The chain is Proteasome subunit beta type-5 from Spinacia oleracea (Spinach).